Reading from the N-terminus, the 423-residue chain is tRNA(Ile)-lysidine synthase (423 aa).

43–48 (SSGVDS) provides a ligand contact to ATP.

This sequence belongs to the tRNA(Ile)-lysidine synthase family.

It is found in the cytoplasm. It carries out the reaction cytidine(34) in tRNA(Ile2) + L-lysine + ATP = lysidine(34) in tRNA(Ile2) + AMP + diphosphate + H(+). Ligates lysine onto the cytidine present at position 34 of the AUA codon-specific tRNA(Ile) that contains the anticodon CAU, in an ATP-dependent manner. Cytidine is converted to lysidine, thus changing the amino acid specificity of the tRNA from methionine to isoleucine. The chain is tRNA(Ile)-lysidine synthase from Helicobacter hepaticus (strain ATCC 51449 / 3B1).